The sequence spans 387 residues: BarH-like 2 homeobox protein (387 aa).

Disordered stretches follow at residues 1–145 (MTME…FLIK), 157–240 (CAPY…TAFS), and 367–387 (PGGQ…PHPR). Residues 7–24 (SGSSFGIDTILSSASSGS) are compositionally biased toward polar residues. Low complexity predominate over residues 100–113 (APTQSLQPLPQQQQ). Positions 114–126 (PLPPQQPPPPPPQ) are enriched in pro residues. Residues 127–141 (QLGSAASAPRTSTSS) show a composition bias toward low complexity. Positions 160–178 (YSTSVSSPHHTPKQESNAV) are enriched in polar residues. Over residues 180–220 (ESFRPKLEQEDSKTKLDKREDSQSDIKCHGTKEEGDREITS) the composition is skewed to basic and acidic residues. The segment at residues 232–291 (PRKARTAFSDHQLNQLERSFERQKYLSVQDRMDLAAALNLTDTQVKTWYQNRRTKWKRQT) is a DNA-binding region (homeobox).

It belongs to the BAR homeobox family.

The protein resides in the nucleus. Functionally, potential regulator of neural basic helix-loop-helix genes. The chain is BarH-like 2 homeobox protein (BARHL2) from Homo sapiens (Human).